The chain runs to 275 residues: Undecaprenyl-diphosphatase 2 (275 aa).

7 helical membrane-spanning segments follow: residues 48–68 (NAYV…ALLF), 90–110 (GLTL…GLLF), 117–137 (IFHV…MIAA), 154–174 (ISYK…WPGF), 195–215 (ANFT…LSLI), 223–243 (ISLL…SLVV), and 254–274 (IKLV…LFLF).

Belongs to the UppP family.

Its subcellular location is the cell membrane. The enzyme catalyses di-trans,octa-cis-undecaprenyl diphosphate + H2O = di-trans,octa-cis-undecaprenyl phosphate + phosphate + H(+). Functionally, catalyzes the dephosphorylation of undecaprenyl diphosphate (UPP). Confers resistance to bacitracin. This is Undecaprenyl-diphosphatase 2 from Shouchella clausii (strain KSM-K16) (Alkalihalobacillus clausii).